A 202-amino-acid polypeptide reads, in one-letter code: MSRYRGPRVRIIRRLGTLPGLTNKTSKLKSSSINQSTSNKKISQYRIRLEEKQKLRFHYGITERQLLNYVRIARKAKGSTGEVLLQLLEMRSDNVIFRLGMAPTIPGARQLVNHRHILVNDCIVDIPSYRCKPQDFITIKNQPKSETMISKNIELYQKSKVPNHLTYSSLEKKGLVNQILDRESIGLKINELLVVEYYSRQA.

One can recognise an S4 RNA-binding domain in the interval 90–158; the sequence is MRSDNVIFRL…ISKNIELYQK (69 aa).

It belongs to the universal ribosomal protein uS4 family. Part of the 30S ribosomal subunit. Contacts protein S5. The interaction surface between S4 and S5 is involved in control of translational fidelity.

It localises to the plastid. The protein resides in the chloroplast. Functionally, one of the primary rRNA binding proteins, it binds directly to 16S rRNA where it nucleates assembly of the body of the 30S subunit. Its function is as follows. With S5 and S12 plays an important role in translational accuracy. The chain is Small ribosomal subunit protein uS4c (rps4) from Anthoceros punctatus (Hornwort).